Here is a 196-residue protein sequence, read N- to C-terminus: T-cell surface glycoprotein CD3 epsilon chain (196 aa).

The first 21 residues, 1–21 (MPSGNLWKVLGLCLLSVGAWG), serve as a signal peptide directing secretion. Over 22-116 (QEDIERPDED…VCENCVEVDL (95 aa)) the chain is Extracellular. One can recognise an Ig-like domain in the interval 28-102 (PDEDTQKTFK…VGEKTSHRLY (75 aa)). Cys49 and Cys91 form a disulfide bridge. A helical transmembrane segment spans residues 117–137 (MAVVTIIVVDICITLGLLMVV). Residues 138–196 (YYYSKSRKAKAMPVTRGAGAGGRPRGQNRERPPPVPNPDYEPIRKGQRDLYSGLNQRGR) lie on the Cytoplasmic side of the membrane. The segment at 150–196 (PVTRGAGAGGRPRGQNRERPPPVPNPDYEPIRKGQRDLYSGLNQRGR) is disordered. The segment at 164–181 (QNRERPPPVPNPDYEPIR) is NUMB-binding region. Positions 167–194 (ERPPPVPNPDYEPIRKGQRDLYSGLNQR) constitute an ITAM domain. The tract at residues 168-175 (RPPPVPNP) is proline-rich sequence. A phosphotyrosine mark is found at Tyr177 and Tyr188.

As to quaternary structure, the TCR-CD3 complex is composed of a CD3D/CD3E and a CD3G/CD3E heterodimers that preferentially associate with TCRalpha and TCRbeta, respectively, to form TCRalpha/CD3E/CD3G and TCRbeta/CD3G/CD3E trimers. In turn, the hexamer interacts with CD3Z homodimer to form the TCR-CD3 complex. Alternatively, TCRalpha and TCRbeta can be replaced by TCRgamma and TCRdelta. Interacts with CD6. Interacts (via Proline-rich sequence) with NCK1; the interaction is ligand dependent but independent of tyrosine kinase activation. Phosphorylated on Tyr residues after T-cell receptor triggering by LCK in association with CD4/CD8.

The protein localises to the cell membrane. In terms of biological role, part of the TCR-CD3 complex present on T-lymphocyte cell surface that plays an essential role in adaptive immune response. When antigen presenting cells (APCs) activate T-cell receptor (TCR), TCR-mediated signals are transmitted across the cell membrane by the CD3 chains CD3D, CD3E, CD3G and CD3Z. All CD3 chains contain immunoreceptor tyrosine-based activation motifs (ITAMs) in their cytoplasmic domain. Upon TCR engagement, these motifs become phosphorylated by Src family protein tyrosine kinases LCK and FYN, resulting in the activation of downstream signaling pathways. In addition of this role of signal transduction in T-cell activation, CD3E plays an essential role in correct T-cell development. Also participates in internalization and cell surface down-regulation of TCR-CD3 complexes via endocytosis sequences present in CD3E cytosolic region. In addition to its role as a TCR coreceptor, it serves as a receptor for ITPRIPL1. Ligand recognition inhibits T-cell activation by promoting interaction with NCK1, which prevents CD3E-ZAP70 interaction and blocks the ERK-NFkB signaling cascade and calcium influx. This chain is T-cell surface glycoprotein CD3 epsilon chain (CD3E), found in Sus scrofa (Pig).